The following is a 472-amino-acid chain: Arginine biosynthesis bifunctional protein ArgJ, mitochondrial (472 aa).

Residues Thr200, Lys229, Thr240, Glu327, Asn467, and Thr472 each contribute to the substrate site. Thr240 serves as the catalytic Nucleophile.

The protein belongs to the ArgJ family. In terms of assembly, heterodimer of an alpha and a beta chain. In terms of processing, the alpha and beta chains are autoproteolytically processed from a single precursor protein within the mitochondrion.

It localises to the mitochondrion matrix. The enzyme catalyses N(2)-acetyl-L-ornithine + L-glutamate = N-acetyl-L-glutamate + L-ornithine. The catalysed reaction is L-glutamate + acetyl-CoA = N-acetyl-L-glutamate + CoA + H(+). Its pathway is amino-acid biosynthesis; L-arginine biosynthesis; L-ornithine and N-acetyl-L-glutamate from L-glutamate and N(2)-acetyl-L-ornithine (cyclic): step 1/1. It participates in amino-acid biosynthesis; L-arginine biosynthesis; N(2)-acetyl-L-ornithine from L-glutamate: step 1/4. Functionally, catalyzes two activities which are involved in the cyclic version of arginine biosynthesis: the synthesis of acetylglutamate from glutamate and acetyl-CoA, and of ornithine by transacetylation between acetylornithine and glutamate. The polypeptide is Arginine biosynthesis bifunctional protein ArgJ, mitochondrial (Talaromyces marneffei (strain ATCC 18224 / CBS 334.59 / QM 7333) (Penicillium marneffei)).